A 321-amino-acid chain; its full sequence is Lipoyl synthase (321 aa).

Residues C68, C73, C79, C94, C98, C101, and S308 each coordinate [4Fe-4S] cluster. In terms of domain architecture, Radical SAM core spans 80-297 (FNHGTATFMI…KDVAMGLGFS (218 aa)).

This sequence belongs to the radical SAM superfamily. Lipoyl synthase family. It depends on [4Fe-4S] cluster as a cofactor.

The protein resides in the cytoplasm. The catalysed reaction is [[Fe-S] cluster scaffold protein carrying a second [4Fe-4S](2+) cluster] + N(6)-octanoyl-L-lysyl-[protein] + 2 oxidized [2Fe-2S]-[ferredoxin] + 2 S-adenosyl-L-methionine + 4 H(+) = [[Fe-S] cluster scaffold protein] + N(6)-[(R)-dihydrolipoyl]-L-lysyl-[protein] + 4 Fe(3+) + 2 hydrogen sulfide + 2 5'-deoxyadenosine + 2 L-methionine + 2 reduced [2Fe-2S]-[ferredoxin]. The protein operates within protein modification; protein lipoylation via endogenous pathway; protein N(6)-(lipoyl)lysine from octanoyl-[acyl-carrier-protein]: step 2/2. Catalyzes the radical-mediated insertion of two sulfur atoms into the C-6 and C-8 positions of the octanoyl moiety bound to the lipoyl domains of lipoate-dependent enzymes, thereby converting the octanoylated domains into lipoylated derivatives. This Aeromonas hydrophila subsp. hydrophila (strain ATCC 7966 / DSM 30187 / BCRC 13018 / CCUG 14551 / JCM 1027 / KCTC 2358 / NCIMB 9240 / NCTC 8049) protein is Lipoyl synthase.